Consider the following 546-residue polypeptide: Phosphoglucomutase (546 aa).

Serine 135 (phosphoserine intermediate) is an active-site residue. The Mg(2+) site is built by serine 135, aspartate 288, aspartate 290, and aspartate 292.

This sequence belongs to the phosphohexose mutase family. Mg(2+) is required as a cofactor.

The enzyme catalyses alpha-D-glucose 1-phosphate = alpha-D-glucose 6-phosphate. The protein operates within glycolipid metabolism; diglucosyl-diacylglycerol biosynthesis. Its function is as follows. Catalyzes the interconversion between glucose-6-phosphate and alpha-glucose-1-phosphate. This is the first step in the biosynthesis of diglucosyl-diacylglycerol (Glc2-DAG), i.e. a glycolipid found in the membrane, which is also used as a membrane anchor for lipoteichoic acid (LTA). In Staphylococcus epidermidis (strain ATCC 35984 / DSM 28319 / BCRC 17069 / CCUG 31568 / BM 3577 / RP62A), this protein is Phosphoglucomutase (pgcA).